Here is a 622-residue protein sequence, read N- to C-terminus: MQSSKSSLAALTLGAIGVVYGDIGTSVLYAVKEVFGSGHVPFTQSNVYGILSIFFWTLTVIVSLKYVVLVLRADNHGEGGLVAMLALASQAVKDKPRLRSALLAVGIFGTSLFYGDGVITPAISVLSAIEGLEVVSPHFKKYVIPITLVVLFCLFAVQKRGTGGIGRFFGPITLVWFASIALLGLAHILGHPEILWALSPHHALGFMFANPGTSFIILGAVVLCVTGAEALYADLGHFGKRPIRLAWFGVAMPALTLNYFGQGALLLAEPGAVRNPFYMMAPDWALIPLVVLATMATVIASQALITGAFSVTKQVIQLGYLPRLGIQHTSVRDTGQIYMPLVNWGLFVAIVLAVVMFRSSSNLAAAYGIAVTLDMLITTTLTFFVIRYGWGYPLALCVAATGCFAVVDLAFFASNLLKLFQGGWFPLMIGGIVFALMMTWKEGRRLLNVKLRADALDLKDFLASVFTNPPTRVEGTAVFLTAGTGAVPNALLHNLKHNKVLHQQNLFVTVHNHETPWIGLDRRLQIESLGHDCWQVVIHYGFKNDLDLPRALALLRGRGCDIEPMSTSYFLSRDTVIPTIGSGMAPWREKLFAQMHHNASGAADFLHLPSNAVVELGSKIEI.

Transmembrane regions (helical) follow at residues 8-28, 50-70, 103-123, 137-157, 168-188, 203-223, 247-267, 285-305, 337-357, 366-386, 393-413, and 419-439; these read LAAL…TSVL, ILSI…VVLV, LAVG…TPAI, PHFK…LFAV, FFGP…LAHI, ALGF…AVVL, WFGV…ALLL, ALIP…QALI, IYMP…VVMF, AYGI…FFVI, PLAL…AFFA, and LFQG…LMMT.

This sequence belongs to the HAK/KUP transporter (TC 2.A.72) family.

Its subcellular location is the cell inner membrane. It catalyses the reaction K(+)(in) + H(+)(in) = K(+)(out) + H(+)(out). Transport of potassium into the cell. Likely operates as a K(+):H(+) symporter. This is Probable potassium transport system protein Kup from Verminephrobacter eiseniae (strain EF01-2).